Here is a 463-residue protein sequence, read N- to C-terminus: Cysteine--tRNA ligase (463 aa).

Cys27 provides a ligand contact to Zn(2+). Residues Met29–His39 carry the 'HIGH' region motif. Cys208, His233, and Glu237 together coordinate Zn(2+). Residues Lys265–Ser269 carry the 'KMSKS' region motif. Residue Lys268 coordinates ATP.

This sequence belongs to the class-I aminoacyl-tRNA synthetase family. As to quaternary structure, monomer. Requires Zn(2+) as cofactor.

The protein resides in the cytoplasm. The enzyme catalyses tRNA(Cys) + L-cysteine + ATP = L-cysteinyl-tRNA(Cys) + AMP + diphosphate. In Marinobacter nauticus (strain ATCC 700491 / DSM 11845 / VT8) (Marinobacter aquaeolei), this protein is Cysteine--tRNA ligase.